We begin with the raw amino-acid sequence, 225 residues long: Plasma membrane-associated cation-binding protein 1 (225 aa).

G2 carries N-myristoyl glycine lipidation. A Phosphothreonine modification is found at T32. Residue S107 is modified to Phosphoserine. Over residues 140–197 the composition is skewed to basic and acidic residues; sequence PVEEVKAEEPAKTEEPAKTEGTSGEKEEIVEETKKGETPETAVVEEKKPEVEEKKEEA. The interval 140-225 is disordered; that stretch reads PVEEVKAEEP…TAPVAEPPKP (86 aa). Phosphothreonine is present on residues T152 and T177.

It belongs to the DREPP family. Interacts with Turnip mosaic virus (TuMV) P3N-PIPO. The cofactor is Cu(2+). Mostly expressed in the basal region of hypocotyls. Expressed in seedlings, roots, shoots, stems, leaves (e.g. in epidermis and vascular tissues), flowers (e.g. in pistils and anthers) and siliques (at protein level).

Its subcellular location is the cell membrane. The protein localises to the cytoplasm. The protein resides in the cytoskeleton. It localises to the cell junction. It is found in the plasmodesma. Its function is as follows. May be involved in intracellular signaling through interaction with PtdInsPs and calmodulin (CaM); may keep PtdInsPs attached to the plasma membrane until Ca(2+)-CaM reaches a competitive concentration subsequent to an increase triggered by a stimulus, thus leading to PtdInsPs release and subsequent activation of InsPs-dependent signaling cascade. Interacts competitively at the N-terminus with calcium ions and CaM (in a calcium-dependent manner), and with the phosphatidylinositol phosphates PtdIns(3,4,5)P(3), PtdIns(3,4)P(2), PtdIns(4,5)P(2) and PtdIns(3,5)P(2). Also binds weakly to PtdIns(3)P, PtdIns(4)P and PtdIns(5)P. Negative regulator of hypocotyl cell elongation by destabilizing cortical microtubules in a calcium-dependent manner. Binds directly to and destabilized microtubules to enhance microtubule depolymerization when cytoplasmic calcium increases. In case of Turnip mosaic virus (TuMV) infection, confers sensitivity by promoting viral cell-to-cell movement through interaction with viral P3N-PIPO. The protein is Plasma membrane-associated cation-binding protein 1 (PCAP1) of Arabidopsis thaliana (Mouse-ear cress).